The following is a 737-amino-acid chain: Elongation factor 2 (737 aa).

A tr-type G domain is found at threonine 18–arginine 262. GTP-binding positions include alanine 27–threonine 34, aspartate 93–histidine 97, and asparagine 147–aspartate 150. Histidine 604 bears the Diphthamide mark.

It belongs to the TRAFAC class translation factor GTPase superfamily. Classic translation factor GTPase family. EF-G/EF-2 subfamily.

The protein resides in the cytoplasm. Its function is as follows. Catalyzes the GTP-dependent ribosomal translocation step during translation elongation. During this step, the ribosome changes from the pre-translocational (PRE) to the post-translocational (POST) state as the newly formed A-site-bound peptidyl-tRNA and P-site-bound deacylated tRNA move to the P and E sites, respectively. Catalyzes the coordinated movement of the two tRNA molecules, the mRNA and conformational changes in the ribosome. The sequence is that of Elongation factor 2 (fusA) from Sulfolobus acidocaldarius (strain ATCC 33909 / DSM 639 / JCM 8929 / NBRC 15157 / NCIMB 11770).